Consider the following 450-residue polypeptide: Probable transporter MCH1 (450 aa).

12 helical membrane passes run 32–52, 69–89, 96–116, 127–147, 157–177, 199–219, 255–275, 290–309, 320–340, 355–375, 378–398, and 423–443; these read AFLV…ISLY, VLFS…GLLS, MLSW…AWVF, VLCF…ALFT, LCSI…GSQL, LAVA…IVTM, PAAY…EMFL, VLPE…GLII, MSVQ…VVLA, LSGA…LAVW, AVFG…SILF, and VFWS…LMYL.

It belongs to the major facilitator superfamily.

Its subcellular location is the vacuole membrane. Probable transporter. The sequence is that of Probable transporter MCH1 (MCH1) from Eremothecium gossypii (strain ATCC 10895 / CBS 109.51 / FGSC 9923 / NRRL Y-1056) (Yeast).